Here is a 129-residue protein sequence, read N- to C-terminus: Phosphoribosyl-AMP cyclohydrolase (129 aa).

Residue Asp-82 coordinates Mg(2+). Zn(2+) is bound at residue Cys-83. Residues Asp-84 and Asp-86 each coordinate Mg(2+). The Zn(2+) site is built by Cys-99 and Cys-106.

This sequence belongs to the PRA-CH family. As to quaternary structure, homodimer. Requires Mg(2+) as cofactor. Zn(2+) is required as a cofactor.

It is found in the cytoplasm. It carries out the reaction 1-(5-phospho-beta-D-ribosyl)-5'-AMP + H2O = 1-(5-phospho-beta-D-ribosyl)-5-[(5-phospho-beta-D-ribosylamino)methylideneamino]imidazole-4-carboxamide. Its pathway is amino-acid biosynthesis; L-histidine biosynthesis; L-histidine from 5-phospho-alpha-D-ribose 1-diphosphate: step 3/9. Functionally, catalyzes the hydrolysis of the adenine ring of phosphoribosyl-AMP. This Methanosarcina barkeri (strain Fusaro / DSM 804) protein is Phosphoribosyl-AMP cyclohydrolase.